The following is a 165-amino-acid chain: Type VI lipase immunity protein Tli3 (165 aa).

The signal sequence occupies residues Met-1–Ala-21.

In terms of assembly, interacts with the Tle3 toxin.

Its subcellular location is the periplasm. In terms of biological role, immunity protein that neutralizes the toxicity of the P.aeruginosa antibacterial toxin Tle3 in the periplasm to protect the cell from fratricide intoxication. The protein is Type VI lipase immunity protein Tli3 of Pseudomonas aeruginosa (strain ATCC 15692 / DSM 22644 / CIP 104116 / JCM 14847 / LMG 12228 / 1C / PRS 101 / PAO1).